The sequence spans 430 residues: Histidine--tRNA ligase, chloroplastic (430 aa).

This sequence belongs to the class-II aminoacyl-tRNA synthetase family.

It localises to the plastid. It is found in the chloroplast. It carries out the reaction tRNA(His) + L-histidine + ATP = L-histidyl-tRNA(His) + AMP + diphosphate + H(+). This chain is Histidine--tRNA ligase, chloroplastic, found in Pyropia yezoensis (Susabi-nori).